The following is a 502-amino-acid chain: Cobyric acid synthase (502 aa).

Residues 260 to 433 (VLRVAVCAVP…WHGSLESDGF (174 aa)) form the GATase cobBQ-type domain. The active-site Nucleophile is C341. Residue H425 is part of the active site.

It belongs to the CobB/CobQ family. CobQ subfamily.

It functions in the pathway cofactor biosynthesis; adenosylcobalamin biosynthesis. Functionally, catalyzes amidations at positions B, D, E, and G on adenosylcobyrinic A,C-diamide. NH(2) groups are provided by glutamine, and one molecule of ATP is hydrogenolyzed for each amidation. In Streptomyces coelicolor (strain ATCC BAA-471 / A3(2) / M145), this protein is Cobyric acid synthase.